A 299-amino-acid chain; its full sequence is ATP phosphoribosyltransferase (299 aa).

Belongs to the ATP phosphoribosyltransferase family. Long subfamily. As to quaternary structure, equilibrium between an active dimeric form, an inactive hexameric form and higher aggregates. Interconversion between the various forms is largely reversible and is influenced by the natural substrates and inhibitors of the enzyme. Requires Mg(2+) as cofactor.

The protein resides in the cytoplasm. The catalysed reaction is 1-(5-phospho-beta-D-ribosyl)-ATP + diphosphate = 5-phospho-alpha-D-ribose 1-diphosphate + ATP. Its pathway is amino-acid biosynthesis; L-histidine biosynthesis; L-histidine from 5-phospho-alpha-D-ribose 1-diphosphate: step 1/9. Its activity is regulated as follows. Feedback inhibited by histidine. Catalyzes the condensation of ATP and 5-phosphoribose 1-diphosphate to form N'-(5'-phosphoribosyl)-ATP (PR-ATP). Has a crucial role in the pathway because the rate of histidine biosynthesis seems to be controlled primarily by regulation of HisG enzymatic activity. This is ATP phosphoribosyltransferase from Buchnera aphidicola subsp. Baizongia pistaciae (strain Bp).